Here is a 448-residue protein sequence, read N- to C-terminus: Probable glycine dehydrogenase (decarboxylating) subunit 1 (448 aa).

The protein belongs to the GcvP family. N-terminal subunit subfamily. The glycine cleavage system is composed of four proteins: P, T, L and H. In this organism, the P 'protein' is a heterodimer of two subunits.

The enzyme catalyses N(6)-[(R)-lipoyl]-L-lysyl-[glycine-cleavage complex H protein] + glycine + H(+) = N(6)-[(R)-S(8)-aminomethyldihydrolipoyl]-L-lysyl-[glycine-cleavage complex H protein] + CO2. The glycine cleavage system catalyzes the degradation of glycine. The P protein binds the alpha-amino group of glycine through its pyridoxal phosphate cofactor; CO(2) is released and the remaining methylamine moiety is then transferred to the lipoamide cofactor of the H protein. This Bacillus pumilus (strain SAFR-032) protein is Probable glycine dehydrogenase (decarboxylating) subunit 1.